The chain runs to 823 residues: Dimethyl sulfoxide/trimethylamine N-oxide reductase (823 aa).

The tat-type signal signal peptide spans 1–42 (MTKFSGNELRAELYRRAFLSYSVAPGALGMFGRSLLAKGARA). Mo-bis(molybdopterin guanine dinucleotide) contacts are provided by residues 156–160 (YGWKS), W158, S189, 232–233 (KT), 262–263 (ID), 283–285 (QTD), 364–365 (WS), R368, N476, H480, 500–501 (HD), R523, D553, 685–686 (HP), 691–693 (HSQ), N779, and 796–797 (GQ).

In terms of assembly, homodimer. Mo-bis(molybdopterin guanine dinucleotide) serves as cofactor. Predicted to be exported by the Tat system. The position of the signal peptide cleavage has been experimentally proven.

It is found in the periplasm. The catalysed reaction is dimethyl sulfide + a menaquinone + H2O = dimethyl sulfoxide + a menaquinol. It carries out the reaction trimethylamine + 2 Fe(III)-[cytochrome c] + H2O = trimethylamine N-oxide + 2 Fe(II)-[cytochrome c] + 3 H(+). Functionally, catalyzes the reduction of dimethyl sulfoxide (DMSO) and trimethylamine N-oxide (TMAO) to dimethyl sulfide (DMS) and trimethylamine, respectively. The terminal DMSO reductase can also use various sulfoxides and N-oxide compounds as terminal electron acceptor in addition to DMSO and TMAO. The polypeptide is Dimethyl sulfoxide/trimethylamine N-oxide reductase (dorA) (Rhodobacter capsulatus (Rhodopseudomonas capsulata)).